We begin with the raw amino-acid sequence, 536 residues long: Aminopeptidase (536 aa).

The first 24 residues, 1–24, serve as a signal peptide directing secretion; that stretch reads MSNKNNLRYALGALALSVSAASLA. The 104-residue stretch at 152-255 folds into the PA domain; sequence AGDVTAKVVP…ATYDNGVAWS (104 aa). Thr196 is subject to Phosphothreonine. The Zn(2+) site is built by His296 and Asp308. Glu340 acts as the Proton acceptor in catalysis. Positions 341, 369, and 467 each coordinate Zn(2+). A disulfide bond links Cys465 and Cys470.

This sequence belongs to the peptidase M28 family. M28A subfamily. It depends on Zn(2+) as a cofactor.

The protein resides in the secreted. The catalysed reaction is Release of an N-terminal amino acid, Xaa-|-Yaa-, in which Xaa is preferably Leu, but may be other amino acids including Pro although not Arg or Lys, and Yaa may be Pro. Amino acid amides and methyl esters are also readily hydrolyzed, but rates on arylamides are exceedingly low.. Its function is as follows. A secreted aminopeptidase. Acts on free N-terminal amino groups with a very strong preference for Leu in the first position. This Pseudomonas aeruginosa (strain UCBPP-PA14) protein is Aminopeptidase.